The primary structure comprises 1206 residues: MDRSEIVARENPVITQRVTNLLRTNAPLLFMPIDIHEVRYGAYMLFMYGSLENGYKAEVRIENIPVFFDVQIESDNTNQLFLKSLLTAENITYERLESITQRPVMGYREKEKEFAPYIRIFFKSLYERRKAITYLNNMGYNTAADDTTCYYRMVSRELKLPLTSWIQLQNYSYEPRGLVHRFSVTPDDLVSYQDDGLTDHSIVMAYDIETYSPVKGTVPDPNQANDVVFMICMHIFWIHSTEPLASTCITMVPCKKSSEWTTIVCSSEKNLLLSFAEQFSRWVPDICTGFNDSRYDWPFIVEKSMQHGILEEIFNKMSLFWNQKLDTILKCYYVKEKRVKISAEKSIISSFLHTPGCLPMDVRNMCMQIYPKAEKTSLKAFLENCGLDSKVDLPYHLMWKYYETRDSEKMADVAYYCIIDAQRCQDLLVRHNVIPDRREVGILSYTSLYDCIYYAGGHKVCNMLIAYAIHDEYGRIACSTIARGKREHGKYPGAFVIDPIKGLEQDKPTTGLDFASLYPSLIMAYNFSPEKFVASRDEANNLMAKGESLHYVSFHFNNRLVEGWFVRHNNVPDKMGLYPKVLIDLLNKRTILKQELKKLGEKKECIHESHPGFKELQFRHAMVDAKQKALKIFMNTFYGEAGNNLSPFFLLPLAGGVTSSGQYNLKLVYNFVINKGYGIKYGDTDSLYITCPDSLYTEVTEAYLNSQKTIKHYEQLCHEKVLLSMKAMSTLCAEVNEYLRQDNGTSYLRMAYEEVLFPVCFTGKKKYYGIAHVNTPNFNTKELFIRGIDIIKQGQTKLTKTIGMRIMEESMKLRRPEDHRPPLIEIVKTVLKDAVVNMKQWNFEDFIQTDAWRPDKDNKAVQIFMSRMHARREQLKKHGAAASQFAEPEPGERFSYVIVEKQVQFDIQGHRTDTSRKGDKMEYVSEAKAKNLPIDILFYINNYVLGLCARFINENEEFQPPDNVSNKDEYAQRRAKSYLQKFVQSIHPKDKSVIKQGIVHRQCYKYVHQEIKKKIGIFADLYKEFFNNTTNPIESFIQSTQFMIQYSDEEQKVNHSVKKMVEQHATASNRAGNPAGNPAGNPAGNALMRAIFTQLITEEKKIVQALYSKGDEIHDLLTYIINNINYKIATFQTKQMLTFELSSTHVELLLKLNKTWLILTGIHVAKKHLQALLDSYNNEPPSKTFIQQAIKEECSSIKPSCYDFIS.

Tandem repeats lie at residues 1071–1074, 1075–1078, 1079–1082, and 1083–1086. The tract at residues 1071 to 1086 is 4 X 4 AA tandem repeats of A-G-[NK]-[PA]; that stretch reads AGNPAGNPAGNPAGNA.

The protein belongs to the DNA polymerase type-B family.

The enzyme catalyses DNA(n) + a 2'-deoxyribonucleoside 5'-triphosphate = DNA(n+1) + diphosphate. Functionally, DNA-directed DNA polymerase involved in viral DNA replication. The sequence is that of DNA polymerase beta from Ornithodoros (relapsing fever ticks).